Here is a 156-residue protein sequence, read N- to C-terminus: uncharacterized protein (156 aa).

Residues 1–12 show a composition bias toward pro residues; sequence MSARPSLPPLPA. 2 disordered regions span residues 1-89 and 129-156; these read MSAR…PPPA and PLSP…TMRD. Basic and acidic residues predominate over residues 49 to 67; the sequence is ARAEEAGGEEGKREAEAWT.

This is an uncharacterized protein from Homo sapiens (Human).